The chain runs to 333 residues: Sodium/bile acid cotransporter 7 (333 aa).

Over 1-10 (MGLLERLRKE) the chain is Cytoplasmic. Residues 11-31 (WFIAGIALVIAAARLEPAVGV) form a helical membrane-spanning segment. Residues 32–37 (KGGPLK) lie on the Extracellular side of the membrane. A helical membrane pass occupies residues 38-58 (PEITITYIAVSAIFFNSGLSL). The Cytoplasmic segment spans residues 59 to 71 (KTEELTSALMHVK). A helical transmembrane segment spans residues 72-92 (LHLFVQIFTLVFFPTAIWLFL). The Extracellular portion of the chain corresponds to 93–103 (QLLSITPINEW). A helical transmembrane segment spans residues 104–124 (LLKGLQTVGCMPPPVSSAVIL). Topologically, residues 125-126 (TK) are cytoplasmic. The helical transmembrane segment at 127-147 (AVGGNEAAAIFNSAFGSFLLG) threads the bilayer. The Extracellular portion of the chain corresponds to 148–151 (SSSS). A helical transmembrane segment spans residues 152–172 (VPFTSIFSQLFMTVVVPLIIG). Residues 173–189 (QIVRRYIKDWLERRKPP) lie on the Cytoplasmic side of the membrane. A helical membrane pass occupies residues 190–210 (FGTISSCVLLMIIYTTFCDTF). Over 211–222 (ANPNIDLDKFSL) the chain is Extracellular. Residues 223–243 (IIIVFIIFSVQMSFMFLTFLF) traverse the membrane as a helical segment. At 244-258 (STRSNSGFTPADTVA) the chain is on the cytoplasmic side. Residues 259 to 279 (IIFCSTHKSLTLGIPMLKIVF) traverse the membrane as a helical segment. The Extracellular segment spans residues 280 to 286 (AGYEHLS). Residues 287-307 (LISVPLLIYHPAQILLGSLLV) traverse the membrane as a helical segment. Over 308–333 (PTIKSWMVSRQKALKLTRQPKVPVKV) the chain is Cytoplasmic.

It belongs to the bile acid:sodium symporter (BASS) (TC 2.A.28) family.

Its subcellular location is the cell membrane. It is found in the endoplasmic reticulum membrane. The protein localises to the golgi apparatus membrane. Functionally, involved in teeth and skeletal development. Has an essential role in the biosynthesis and trafficking of glycosaminoglycans and glycoproteins to produce a proper functioning extracellular matrix. Required for extracellular matrix mineralization. Also involved in the regulation of cellular calcium homeostasis. Does not show transport activity towards bile acids or steroid sulfates. This chain is Sodium/bile acid cotransporter 7 (SLC10A7), found in Gallus gallus (Chicken).